The primary structure comprises 321 residues: Glutaminase (321 aa).

Substrate is bound by residues S69, N120, E165, N172, Y196, Y248, and V266.

Belongs to the glutaminase family. In terms of assembly, homotetramer.

The catalysed reaction is L-glutamine + H2O = L-glutamate + NH4(+). This Bacteroides fragilis (strain ATCC 25285 / DSM 2151 / CCUG 4856 / JCM 11019 / LMG 10263 / NCTC 9343 / Onslow / VPI 2553 / EN-2) protein is Glutaminase.